Here is a 254-residue protein sequence, read N- to C-terminus: Probable WRKY transcription factor 67 (254 aa).

Positions 102 to 170 form a DNA-binding region, WRKY; it reads SRTMCPNDGF…YLGKHVCKAF (69 aa).

Belongs to the WRKY group III family.

The protein resides in the nucleus. Its function is as follows. Transcription factor. Interacts specifically with the W box (5'-(T)TGAC[CT]-3'), a frequently occurring elicitor-responsive cis-acting element. The sequence is that of Probable WRKY transcription factor 67 (WRKY67) from Arabidopsis thaliana (Mouse-ear cress).